Reading from the N-terminus, the 349-residue chain is 5-deoxyribose 1-phosphate isomerase (349 aa).

Substrate is bound by residues R49–A51, R92, and Q199. D240 functions as the Proton donor in the catalytic mechanism. A substrate-binding site is contributed by N250–K251.

It belongs to the EIF-2B alpha/beta/delta subunits family. DrdI subfamily.

It catalyses the reaction 5-deoxy-alpha-D-ribose 1-phosphate = 5-deoxy-D-ribulose 1-phosphate. The protein operates within carbohydrate degradation. Functionally, catalyzes the isomerization of 5-deoxy-alpha-D-ribose 1-phosphate to 5-deoxy-D-ribulose 1-phosphate, as part of a 5-deoxyribose salvage pathway that recycles this toxic radical SAM enzyme by-product to mainstream metabolites. The protein is 5-deoxyribose 1-phosphate isomerase of Clostridium botulinum (strain Okra / Type B1).